Reading from the N-terminus, the 342-residue chain is Dihydroorotate dehydrogenase (quinone) (342 aa).

Residues 65 to 69 (AGLDK) and Thr-89 contribute to the FMN site. Lys-69 serves as a coordination point for substrate. Residue 114–118 (NRMGF) coordinates substrate. FMN is bound by residues Asn-142 and Asn-175. Substrate is bound at residue Asn-175. Ser-178 functions as the Nucleophile in the catalytic mechanism. Asn-180 contributes to the substrate binding site. 2 residues coordinate FMN: Lys-220 and Thr-248. 249–250 (NT) is a substrate binding site. Residues Gly-271, Gly-300, and 321–322 (YT) contribute to the FMN site.

Belongs to the dihydroorotate dehydrogenase family. Type 2 subfamily. In terms of assembly, monomer. The cofactor is FMN.

It is found in the cell membrane. The catalysed reaction is (S)-dihydroorotate + a quinone = orotate + a quinol. It participates in pyrimidine metabolism; UMP biosynthesis via de novo pathway; orotate from (S)-dihydroorotate (quinone route): step 1/1. In terms of biological role, catalyzes the conversion of dihydroorotate to orotate with quinone as electron acceptor. The sequence is that of Dihydroorotate dehydrogenase (quinone) from Burkholderia pseudomallei (strain K96243).